Here is a 736-residue protein sequence, read N- to C-terminus: Segment polarity protein dishevelled homolog DVL-2 (736 aa).

Residues 11–93 form the DIX domain; sequence VGETKVIYHL…RVVSWLVSSD (83 aa). The segment at 93–255 is disordered; sequence DTPQPEVAPP…RMERTSSFSS (163 aa). The span at 111–122 shows a compositional bias: pro residues; the sequence is VPPPPPLPPLPP. Over residues 159–171 the composition is skewed to basic and acidic residues; that stretch reads LRRDRPRRRDSSE. Residues 193–208 are compositionally biased toward low complexity; sequence ESSSTLMTSELESTSL. A Phosphoserine modification is found at Ser-211. Over residues 218–230 the composition is skewed to polar residues; sequence SRFSSSTEQSSAS. Basic residues predominate over residues 232 to 244; it reads LLKRHRRRRKQRP. A PDZ domain is found at 267–339; sequence TVTLNMEKYN…NDDAVRVLRD (73 aa). The DEP domain maps to 433 to 507; the sequence is PESGLEVRDR…SEQCYYVFGD (75 aa). A compositionally biased stretch (pro residues) spans 558 to 568; that stretch reads PHPYSPQPPPY. The disordered stretch occupies residues 558 to 665; that stretch reads PHPYSPQPPP…PNLRALPGLH (108 aa). Composition is skewed to low complexity over residues 581-598 and 614-629; these read ASSQ…TRSD and SKSG…SRGG.

This sequence belongs to the DSH family. Interacts through its PDZ domain with the C-terminal regions of VANGL1 and VANGL2. Interacts with Rac. Interacts with ARRB1; the interaction is enhanced by phosphorylation of DVL1. Can form large oligomers (via DIX domain). Interacts (via DIX domain) with DIXDC1 (via DIX domain). Interacts (via DEP domain) with AP2M1 and the AP-2 complex. Interacts with FAM105B/otulin. Interacts with DCDC2. Interacts (when phosphorylated) with FOXK1 and FOXK2; the interaction induces DVL2 nuclear translocation. Interacts with MAPK15. Interacts with PKD1 (via extracellular domain). Interacts with LMBR1L. In terms of processing, phosphorylated by CSNK1D. WNT3A induces DVL2 phosphorylation by CSNK1E and MARK kinases. Post-translationally, ubiquitinated via 'Lys-63'-linked polyubiquitin chains; leading to its autophagy-mediated degradation. In terms of tissue distribution, ubiquitous.

Its subcellular location is the cell membrane. It localises to the cytoplasm. It is found in the cytosol. The protein localises to the cytoplasmic vesicle. The protein resides in the nucleus. Its function is as follows. Plays a role in the signal transduction pathways mediated by multiple Wnt genes. Participates both in canonical and non-canonical Wnt signaling by binding to the cytoplasmic C-terminus of frizzled family members and transducing the Wnt signal to down-stream effectors. Promotes internalization and degradation of frizzled proteins upon Wnt signaling. The polypeptide is Segment polarity protein dishevelled homolog DVL-2 (Dvl2) (Mus musculus (Mouse)).